The chain runs to 566 residues: APC membrane recruitment protein 2 (566 aa).

Disordered regions lie at residues 120–176, 192–237, 277–307, and 342–533; these read KKNG…PGLI, TQKP…SPCS, VTGC…GKKV, and MIPP…RTKI. 3 stretches are compositionally biased toward basic and acidic residues: residues 123–134, 155–168, and 192–204; these read GKSENVRGEQAE, SKKD…KEGA, and TQKP…KSTE. Composition is skewed to basic and acidic residues over residues 364 to 377 and 389 to 411; these read REVK…DRNA and YRKE…RNSD. A compositionally biased stretch (low complexity) spans 464-476; that stretch reads PPLSHSHSKPLSP. Composition is skewed to polar residues over residues 477 to 489 and 504 to 517; these read VTTS…ASSN and HTTN…SGSA.

It belongs to the Amer family.

The protein localises to the cell membrane. Functionally, negative regulator of the canonical Wnt signaling pathway involved in neuroectodermal patterning. Acts by specifically binding phosphatidylinositol 4,5-bisphosphate (PtdIns(4,5)P2), translocating to the cell membrane and interacting with key regulators of the canonical Wnt signaling pathway, such as components of the beta-catenin destruction complex. The chain is APC membrane recruitment protein 2 (amer2) from Xenopus tropicalis (Western clawed frog).